Reading from the N-terminus, the 416-residue chain is MISGLFKLSNKQSVLQNATKLVLQRRTFFNIVPNPSVGLTEDQKQFQSMALDFAQEKMKPFAEKWDKEEYFPRDVMREAAELGFGGIYVREDVGGSGLSRLDASIIIEALASADVSTTAFISIHNMCAGLIDIYGTEEQRKKFLPSLVSMEKIASYCLTEPGSGSDAGSLSTKATKDGDHYILNGSKAFISGGGDSEVYLVMVRTGAEKGPKGISCLLVEKDTPGLSFGKKEEKLGWNTQPTRALIFEDCRVPVGNLIGKEGQGFSIAMNALNGGRINIGACSLGGAQSCLVAARDHVKVRKQFNQPLEHFQAVQFKMADMATKLHASRIMIRNAAAMLDAKDPSAHVYIAMAKLFACDECFKVTDDSLQLFGGYGYLKDYPVERYLRDLRVHRILEGSDAVMRLIISRELSKDDH.

The transit peptide at 1 to 21 (MISGLFKLSNKQSVLQNATKL) directs the protein to the mitochondrion. FAD is bound by residues 156–165 (YCLTEPGSGS) and 189–191 (FIS). S165 contributes to the substrate binding site. A substrate-binding site is contributed by 273–276 (NGGR). FAD-binding positions include R301, 311–312 (FQ), and 370–374 (QLFGG). E397 (proton acceptor) is an active-site residue. 399–401 (SDA) serves as a coordination point for FAD. R409 is a substrate binding site.

This sequence belongs to the acyl-CoA dehydrogenase family. As to quaternary structure, homotetramer. FAD is required as a cofactor.

It is found in the mitochondrion. It carries out the reaction 2-methylpropanoyl-CoA + oxidized [electron-transfer flavoprotein] + H(+) = 2-methylpropenoyl-CoA + reduced [electron-transfer flavoprotein]. The enzyme catalyses (2S)-2-methylbutanoyl-CoA + oxidized [electron-transfer flavoprotein] + H(+) = (2E)-2-methylbut-2-enoyl-CoA + reduced [electron-transfer flavoprotein]. The catalysed reaction is propanoyl-CoA + oxidized [electron-transfer flavoprotein] + H(+) = acryloyl-CoA + reduced [electron-transfer flavoprotein]. Its pathway is amino-acid degradation; L-valine degradation. In terms of biological role, isobutyryl-CoA dehydrogenase which catalyzes one of the steps of the valine catabolic pathway. To a lesser extent, is also able to catalyze the oxidation of (2S)-2-methylbutanoyl-CoA. The sequence is that of Isobutyryl-CoA dehydrogenase, mitochondrial (acad8) from Dictyostelium discoideum (Social amoeba).